Reading from the N-terminus, the 114-residue chain is Transmembrane protein 14DP (114 aa).

The next 4 membrane-spanning stretches (helical) occupy residues 8-28, 36-56, 63-80, and 83-103; these read LVPLHWFGFGYTALVVSGGIV, APSLAAGLLFGSLAGVGAYQL, VWDFLAATSVTFVGIMGM, and YYYGKFMPVGLIAGASLLMAA.

Belongs to the TMEM14 family.

Its subcellular location is the membrane. This Homo sapiens (Human) protein is Transmembrane protein 14DP (TMEM14DP).